The sequence spans 397 residues: Homoserine O-acetyltransferase (397 aa).

Positions 58 to 368 (NAVLVLHALT…EAKWGHDAFL (311 aa)) constitute an AB hydrolase-1 domain. Ser-164 acts as the Nucleophile in catalysis. Arg-233 serves as a coordination point for substrate. Active-site residues include Asp-331 and His-364. Asp-365 provides a ligand contact to substrate.

It belongs to the AB hydrolase superfamily. MetX family. Homodimer.

The protein resides in the cytoplasm. It catalyses the reaction L-homoserine + acetyl-CoA = O-acetyl-L-homoserine + CoA. The protein operates within amino-acid biosynthesis; L-methionine biosynthesis via de novo pathway; O-acetyl-L-homoserine from L-homoserine: step 1/1. In terms of biological role, transfers an acetyl group from acetyl-CoA to L-homoserine, forming acetyl-L-homoserine. The polypeptide is Homoserine O-acetyltransferase (Solidesulfovibrio magneticus (strain ATCC 700980 / DSM 13731 / RS-1) (Desulfovibrio magneticus)).